The sequence spans 641 residues: MPIITLPDGTEKKYDSAVTIDQIASEIGPGLAKAALAGRVNGELIDTCIPITQNSHIQIITSKDDEGLEIIRHSFAHLLGHAVKQLYPEAKMAIGPVIEDGFYYDISYKDTFTPDDLLKIEKRMKELVNRDYSVGVEIVSPEKAKEVFTDRGEIFKLDIVKNIPKNEIIKLYKHQEYIDMCRGPHVPNTRHLRAFKLMKVSGAYWRGDSNNEMLQRIYGTAWKSSKELKEYLSRIEEAEKRDHRKLGKKYSLFHSQEEAPGMVFWHPKGWTIYRILEDFIRETITKYDYQEVKSPQVVDRSLWEKSGHWDKFKEDMFTTTSENREYAIKPMNCPCHIQIFNQGLKSYRDLPIRLSEFGSCHRNEPSGALHGLMRVRNFVQDDAHIFCTDEQIQEEVQNFIDLVFEVYKTFGFDSILIKLSTRPVKRVGSDDIWDKSEKALSEALDSKGLDWSLLPGEGAFYGPKIEFSLKDCLNRVWQCGTIQVDFSMPQRLNASYIDITGRKQTPVMLHRAILGSFERFIGILIENYSGNFPTWLSPIQIMIMGITDRNNEACFTAKDKLVDFGFRAEIDIRNEKVGFKIREHTMQRIPFLIIIGDKEEENSEISVRTREGKDLGNMSIDKFKLIIDESISKKGIQGNQS.

The region spanning 1 to 61 (MPIITLPDGT…TQNSHIQIIT (61 aa)) is the TGS domain. Residues 242–533 (DHRKLGKKYS…LIENYSGNFP (292 aa)) are catalytic. Residues cysteine 333, histidine 384, and histidine 510 each contribute to the Zn(2+) site.

This sequence belongs to the class-II aminoacyl-tRNA synthetase family. Homodimer. It depends on Zn(2+) as a cofactor.

It localises to the cytoplasm. It carries out the reaction tRNA(Thr) + L-threonine + ATP = L-threonyl-tRNA(Thr) + AMP + diphosphate + H(+). Its function is as follows. Catalyzes the attachment of threonine to tRNA(Thr) in a two-step reaction: L-threonine is first activated by ATP to form Thr-AMP and then transferred to the acceptor end of tRNA(Thr). Also edits incorrectly charged L-seryl-tRNA(Thr). This chain is Threonine--tRNA ligase, found in Prochlorococcus marinus (strain NATL2A).